The following is a 90-amino-acid chain: Inner kinetochore subunit MHF1 (90 aa).

This sequence belongs to the TAF9 family. CENP-S/MHF1 subfamily. The MHF histone-fold complex is a heterotetramer of 2 MHF1-MHF2 heterodimers. Together with MPH1/FANCM, forms the FANCM-MHF complex. Component of the inner kinetochore constitutive centromere-associated network (CCAN) (also known as central kinetochore CTF19 complex in yeast), which is composed of at least AME1, CHL4, CNN1, CTF3, CTF19, IML3, MCM16, MCM21, MCM22, MHF1, MHF2, MIF2, NKP1, NKP2, OKP1 and WIP1.

In terms of biological role, dsDNA-binding component of a FANCM-MHF complex involved in DNA damage repair and genome maintenance. FANCM-MHF promotes gene conversion at blocked replication forks, probably by reversal of the stalled fork. Component of the kinetochore, a multiprotein complex that assembles on centromeric DNA and attaches chromosomes to spindle microtubules, mediating chromosome segregation and sister chromatid segregation during meiosis and mitosis. Component of the inner kinetochore constitutive centromere-associated network (CCAN), which serves as a structural platform for outer kinetochore assembly. The sequence is that of Inner kinetochore subunit MHF1 from Saccharomyces cerevisiae (strain ATCC 204508 / S288c) (Baker's yeast).